The primary structure comprises 205 residues: FAS-associated death domain protein (205 aa).

Residues 3–81 (PFLVLLHSLS…RHDLLQRLDD (79 aa)) form the DED domain. The Death domain occupies 97 to 181 (LQVAFDIVCD…LVADLVEEAQ (85 aa)). The segment at 181 to 205 (QESVSKSENMSPVLRDSTVSSSETP) is disordered. At Ser-191 the chain carries Phosphoserine.

Can self-associate. Component of the AIM2 PANoptosome complex, a multiprotein complex that drives inflammatory cell death (PANoptosis). Component of the death-induced signaling complex (DISC) composed of cell surface receptor FAS/CD95 or TNFRSF1A, adapter protein FADD and the CASP8 protease; recruitment of CASP8 to the complex is required for processing of CASP8 into the p18 and p10 subunits. Interacts (via death domain) with FAS (via death domain). Interacts directly (via DED domain) with NOL3 (via CARD domain); inhibits death-inducing signaling complex (DISC) assembly by inhibiting the increase in FAS-FADD binding induced by FAS activation. Interacts with CFLAR, PEA15 and MBD4. When phosphorylated, part of a complex containing HIPK3 and FAS. May interact with MAVS/IPS1. Interacts with MOCV v-CFLAR protein and PIDD1. Interacts with RIPK1 and TRADD. Interacts with stimulated TNFRSF10B. Interacts with DDX24.

It localises to the cytoplasm. Its function is as follows. Apoptotic adapter molecule that recruits caspases CASP8 or CASP10 to the activated FAS/CD95 or TNFRSF1A/TNFR-1 receptors. The resulting aggregate called the death-inducing signaling complex (DISC) performs CASP8 proteolytic activation. Active CASP8 initiates the subsequent cascade of caspases mediating apoptosis. Involved in interferon-mediated antiviral immune response, playing a role in the positive regulation of interferon signaling. The protein is FAS-associated death domain protein of Mus musculus (Mouse).